The primary structure comprises 246 residues: Bis(5'-nucleosyl)-tetraphosphatase PrpE [asymmetrical] (246 aa).

Belongs to the PrpE family. It depends on Ni(2+) as a cofactor.

It carries out the reaction P(1),P(4)-bis(5'-guanosyl) tetraphosphate + H2O = GMP + GTP + 2 H(+). Its function is as follows. Asymmetrically hydrolyzes Ap4p to yield AMP and ATP. The protein is Bis(5'-nucleosyl)-tetraphosphatase PrpE [asymmetrical] of Bacillus cereus (strain AH187).